A 71-amino-acid polypeptide reads, in one-letter code: MPSALESRLIDLESRLTHQEAMVDDLSDVIAAQDRTIARLVVQIRHLAGALRDVELGSIGSPADDKPPPHY.

It belongs to the SlyX family.

This is Protein SlyX homolog from Rhodospirillum rubrum (strain ATCC 11170 / ATH 1.1.1 / DSM 467 / LMG 4362 / NCIMB 8255 / S1).